We begin with the raw amino-acid sequence, 73 residues long: Large ribosomal subunit protein bL31 (73 aa).

4 residues coordinate Zn(2+): C16, C18, C37, and C40.

Belongs to the bacterial ribosomal protein bL31 family. Type A subfamily. In terms of assembly, part of the 50S ribosomal subunit. Zn(2+) is required as a cofactor.

Its function is as follows. Binds the 23S rRNA. This Pseudomonas syringae pv. syringae (strain B728a) protein is Large ribosomal subunit protein bL31.